Reading from the N-terminus, the 256-residue chain is Imidazole glycerol phosphate synthase subunit HisF (256 aa).

Residues Asp12 and Asp131 contribute to the active site.

The protein belongs to the HisA/HisF family. In terms of assembly, heterodimer of HisH and HisF.

The protein localises to the cytoplasm. It carries out the reaction 5-[(5-phospho-1-deoxy-D-ribulos-1-ylimino)methylamino]-1-(5-phospho-beta-D-ribosyl)imidazole-4-carboxamide + L-glutamine = D-erythro-1-(imidazol-4-yl)glycerol 3-phosphate + 5-amino-1-(5-phospho-beta-D-ribosyl)imidazole-4-carboxamide + L-glutamate + H(+). The protein operates within amino-acid biosynthesis; L-histidine biosynthesis; L-histidine from 5-phospho-alpha-D-ribose 1-diphosphate: step 5/9. Functionally, IGPS catalyzes the conversion of PRFAR and glutamine to IGP, AICAR and glutamate. The HisF subunit catalyzes the cyclization activity that produces IGP and AICAR from PRFAR using the ammonia provided by the HisH subunit. The chain is Imidazole glycerol phosphate synthase subunit HisF from Pseudomonas putida (strain GB-1).